The chain runs to 545 residues: O-phosphoserine--tRNA(Cys) ligase (545 aa).

Substrate is bound by residues 189 to 191 (HMT), 234 to 236 (SAS), 276 to 277 (YY), and asparagine 328.

Belongs to the class-II aminoacyl-tRNA synthetase family. O-phosphoseryl-tRNA(Cys) synthetase subfamily. As to quaternary structure, homotetramer. Interacts with SepCysS.

The catalysed reaction is tRNA(Cys) + O-phospho-L-serine + ATP = O-phospho-L-seryl-tRNA(Cys) + AMP + diphosphate. Its function is as follows. Catalyzes the attachment of O-phosphoserine (Sep) to tRNA(Cys). The sequence is that of O-phosphoserine--tRNA(Cys) ligase from Methanothrix thermoacetophila (strain DSM 6194 / JCM 14653 / NBRC 101360 / PT) (Methanosaeta thermophila).